The following is a 468-amino-acid chain: UDP-glycosyltransferase 89B2 (468 aa).

UDP-alpha-D-glucose contacts are provided by residues serine 287, 347 to 348 (WV), 365 to 373 (HCGWNSVME), and 387 to 390 (SADQ).

Belongs to the UDP-glycosyltransferase family.

Its function is as follows. May glycosylate diterpenes or flavonols in leaves. This Stevia rebaudiana (Stevia) protein is UDP-glycosyltransferase 89B2.